Here is a 293-residue protein sequence, read N- to C-terminus: Ribosomal protein L11 methyltransferase (293 aa).

S-adenosyl-L-methionine-binding residues include Thr145, Gly166, Asp188, and Asn230.

This sequence belongs to the methyltransferase superfamily. PrmA family.

It is found in the cytoplasm. The catalysed reaction is L-lysyl-[protein] + 3 S-adenosyl-L-methionine = N(6),N(6),N(6)-trimethyl-L-lysyl-[protein] + 3 S-adenosyl-L-homocysteine + 3 H(+). Functionally, methylates ribosomal protein L11. The sequence is that of Ribosomal protein L11 methyltransferase from Escherichia coli O139:H28 (strain E24377A / ETEC).